Consider the following 133-residue polypeptide: Holo-[acyl-carrier-protein] synthase (133 aa).

Mg(2+) contacts are provided by Asp8 and Glu57.

This sequence belongs to the P-Pant transferase superfamily. AcpS family. Mg(2+) serves as cofactor.

The protein localises to the cytoplasm. It carries out the reaction apo-[ACP] + CoA = holo-[ACP] + adenosine 3',5'-bisphosphate + H(+). In terms of biological role, transfers the 4'-phosphopantetheine moiety from coenzyme A to a Ser of acyl-carrier-protein. In Chelativorans sp. (strain BNC1), this protein is Holo-[acyl-carrier-protein] synthase.